Consider the following 438-residue polypeptide: Protein DAY-LENGTH-DEPENDENT DELAYED-GREENING 1, chloroplastic (438 aa).

The N-terminal 54 residues, 1–54 (MSLMSSSMVLCHCLSFSSQNPDPESSSSSLLRYKPCDSISLWGKRRKKLWRFVP), are a transit peptide targeting the chloroplast. A run of 4 helical transmembrane segments spans residues 216-236 (FLAVLILIPWALDFLAHDYLL), 314-334 (AFANIWSDMVFGISLFVLLYA), 359-379 (AFLIILITDIFLGYHSESGWE), and 398-418 (ITIFICLVPVIMDACVKLWLF).

The protein belongs to the CemA family.

It localises to the plastid. The protein resides in the chloroplast envelope. Its subcellular location is the chloroplast membrane. It carries out the reaction K(+)(in) + H(+)(out) = K(+)(out) + H(+)(in). The enzyme catalyses Ca(2+)(in) + H(+)(out) = Ca(2+)(out) + H(+)(in). Promotes K(+)/H(+) antiport activity supporting K(+) efflux to control H(+) homeostasis in chloroplasts. Also able to ensure Ca(2+)/H(+) antiport activity in vitro. Essential for chloroplast pH regulation and optimization of non-photochemical quenching (NPQ), a regulatory mechanism that dissipates excess light energy; acts downstream of PSBS but independently from PGR5 and FLAP1. In Arabidopsis thaliana (Mouse-ear cress), this protein is Protein DAY-LENGTH-DEPENDENT DELAYED-GREENING 1, chloroplastic.